A 383-amino-acid polypeptide reads, in one-letter code: 1-deoxy-D-xylulose 5-phosphate reductoisomerase (383 aa).

NADPH-binding residues include T10, G11, S12, I13, and N123. K124 serves as a coordination point for 1-deoxy-D-xylulose 5-phosphate. E125 provides a ligand contact to NADPH. D149 contributes to the Mn(2+) binding site. S150, E151, S175, and H198 together coordinate 1-deoxy-D-xylulose 5-phosphate. E151 lines the Mn(2+) pocket. G204 contributes to the NADPH binding site. Residues S211, N216, K217, and E220 each contribute to the 1-deoxy-D-xylulose 5-phosphate site. E220 is a Mn(2+) binding site.

Belongs to the DXR family. Requires Mg(2+) as cofactor. It depends on Mn(2+) as a cofactor.

The catalysed reaction is 2-C-methyl-D-erythritol 4-phosphate + NADP(+) = 1-deoxy-D-xylulose 5-phosphate + NADPH + H(+). Its pathway is isoprenoid biosynthesis; isopentenyl diphosphate biosynthesis via DXP pathway; isopentenyl diphosphate from 1-deoxy-D-xylulose 5-phosphate: step 1/6. Functionally, catalyzes the NADPH-dependent rearrangement and reduction of 1-deoxy-D-xylulose-5-phosphate (DXP) to 2-C-methyl-D-erythritol 4-phosphate (MEP). This Desulfosudis oleivorans (strain DSM 6200 / JCM 39069 / Hxd3) (Desulfococcus oleovorans) protein is 1-deoxy-D-xylulose 5-phosphate reductoisomerase.